The primary structure comprises 498 residues: L-xylulose/3-keto-L-gulonate kinase (498 aa).

This sequence belongs to the FGGY kinase family. As to quaternary structure, homodimer.

The enzyme catalyses L-xylulose + ATP = L-xylulose 5-phosphate + ADP + H(+). The catalysed reaction is 3-dehydro-L-gulonate + ATP = 3-dehydro-L-gulonate 6-phosphate + ADP + H(+). In terms of biological role, catalyzes the phosphorylation of L-xylulose and 3-keto-L-gulonate. Is involved in L-lyxose utilization via xylulose, and may also be involved in the utilization of 2,3-diketo-L-gulonate. The polypeptide is L-xylulose/3-keto-L-gulonate kinase (lyx) (Escherichia coli (strain K12)).